Here is a 450-residue protein sequence, read N- to C-terminus: Sorting nexin-4 (450 aa).

The residue at position 1 (M1) is an N-acetylmethionine. The tract at residues 1-46 (MEQAPPDPEKLLQPGPLEPLGGPGAVLEAAVGEENEGTREDGSGVD) is disordered. Over residues 11–20 (LLQPGPLEPL) the composition is skewed to low complexity. The PX domain maps to 61 to 187 (SVSEAEKRTG…YSFLTQEGNW (127 aa)). 4 residues coordinate a 1,2-diacyl-sn-glycero-3-phospho-(1D-myo-inositol-3-phosphate): R106, S108, K132, and R154.

The protein belongs to the sorting nexin family. As to quaternary structure, heterodimer; heterodimerizes with SNX7 or SNX30. Interacts with WWC1/KIBRA. Identified in a complex with WWC1/KIBRA and dynein components DYNLL1 and DYNC1I2. Interacts with BIN1.

It localises to the early endosome. The protein localises to the early endosome membrane. In terms of biological role, involved in the regulation of endocytosis and in several stages of intracellular trafficking. Plays a role in recycling endocytosed transferrin receptor and prevent its degradation. Involved in autophagosome assembly by regulating trafficking and recycling of phospholipid scramblase ATG9A. This is Sorting nexin-4 from Mus musculus (Mouse).